We begin with the raw amino-acid sequence, 1024 residues long: Protein translocase subunit SecA (1024 aa).

ATP-binding positions include Q143, 161–165 (GEGKT), and D661. Residues 970-1024 (HKAAESVYTASSDEPETNQEESPQQPAIAEKKPGRNDLCPCGSGKKYKNCHGQQP) are disordered. Positions 1008, 1010, 1019, and 1020 each coordinate Zn(2+).

Belongs to the SecA family. As to quaternary structure, monomer and homodimer. Part of the essential Sec protein translocation apparatus which comprises SecA, SecYEG and auxiliary proteins SecDF. Other proteins may also be involved. Zn(2+) serves as cofactor.

The protein localises to the cell inner membrane. It localises to the cytoplasm. It carries out the reaction ATP + H2O + cellular proteinSide 1 = ADP + phosphate + cellular proteinSide 2.. Its function is as follows. Part of the Sec protein translocase complex. Interacts with the SecYEG preprotein conducting channel. Has a central role in coupling the hydrolysis of ATP to the transfer of proteins into and across the cell membrane, serving as an ATP-driven molecular motor driving the stepwise translocation of polypeptide chains across the membrane. The sequence is that of Protein translocase subunit SecA from Pelodictyon phaeoclathratiforme (strain DSM 5477 / BU-1).